A 112-amino-acid chain; its full sequence is Putative pterin-4-alpha-carbinolamine dehydratase (112 aa).

Belongs to the pterin-4-alpha-carbinolamine dehydratase family.

The catalysed reaction is (4aS,6R)-4a-hydroxy-L-erythro-5,6,7,8-tetrahydrobiopterin = (6R)-L-erythro-6,7-dihydrobiopterin + H2O. The chain is Putative pterin-4-alpha-carbinolamine dehydratase from Shewanella baltica (strain OS155 / ATCC BAA-1091).